Here is a 676-residue protein sequence, read N- to C-terminus: Envelope glycoprotein (676 aa).

An N-terminal signal peptide occupies residues 1–32 (MEGLSLLQLPRDKFRKSSFFVWVIILFQKAFS). Residues 33-650 (MPLGVVTNST…DDNWWTGWRQ (618 aa)) lie on the Extracellular side of the membrane. Residue N40 is glycosylated (N-linked (GlcNAc...) asparagine; by host). 5 disulfides stabilise this stretch: C53-C609, C108-C135, C121-C147, C511-C556, and C601-C608. The receptor-binding stretch occupies residues 54–201 (KDHLASTDQL…TFLQSPPIRE (148 aa)). N-linked (GlcNAc...) asparagine; by host glycans are attached at residues N204, N208, N238, N257, N268, N296, and N314. Residues 305–485 (ELSFETLSLN…STSNGLITST (181 aa)) form a mucin-like region region. The interval 312–351 (SLNETEDDDATSSRTTKGRISDRATRKYSDLVPKDSPGMV) is disordered. Residues 330–344 (RISDRATRKYSDLVP) are compositionally biased toward basic and acidic residues. N366 carries N-linked (GlcNAc...) asparagine; by host glycosylation. Residues 406-458 (SSSQILSSSPTMAPSPETQTSTTYTPKLPVMTTEEPTTPPRNSPGSTTEAPTL) are disordered. Polar residues-rich tracts occupy residues 415–430 (PTMA…TTYT) and 448–458 (SPGSTTEAPTL). N-linked (GlcNAc...) asparagine; by host glycosylation is present at N463. Positions 524-539 (HNAAGIAWIPYFGPGA) are fusion peptide. Residues 554–595 (LVCGLRQLANETTQALQLFLRATTELRTYTILNRKAIDFLLR) are a coiled coil. The N-linked (GlcNAc...) asparagine; by host glycan is linked to N563. The stretch at 615 to 634 (WTKNITDKINQIIHDFIDNP) forms a coiled coil. N-linked (GlcNAc...) asparagine; by host glycosylation is present at N618. Residues 651–671 (WIPAGIGITGIIIAIIALLCV) form a helical membrane-spanning segment. Residues C670 and C672 are each lipidated (S-palmitoyl cysteine; by host). Residues 672–676 (CKLLC) are Cytoplasmic-facing.

It belongs to the filoviruses glycoprotein family. As to quaternary structure, homotrimer; each monomer consists of a GP1 and a GP2 subunit linked by disulfide bonds. The resulting peplomers (GP1,2) protrude from the virus surface as spikes. Interacts with host integrin alpha-V/ITGAV. Interacts with host CLEC10A. Binds also to host CD209 and CLEC4M/DC-SIGN(R). Interacts with host FOLR1. Interacts with BST2; this interaction inhibits the antiviral effect of BST2 and this allows viral release from infected cells. Interacts with host FCN1; this interaction enhances viral entry. Interacts with host TLR4; this interaction induces cell death in T-lymphocytes or proinflammatory cytokines and SOCS1 production in monocytes. In terms of assembly, interacts with host entry receptor NPC1. GP1 and GP2delta are part of GP1,2delta soluble complexes released by ectodomain shedding. Post-translationally, the signal peptide region modulates GP's high mannose glycosylation, thereby determining the efficiency of the interactions with DC-SIGN(R). N-glycosylated. In terms of processing, O-glycosylated in the mucin-like region. Post-translationally, palmitoylation of GP2 is not required for its function. Specific enzymatic cleavages in vivo yield mature proteins. The precursor is processed into GP1 and GP2 by host cell furin in the trans Golgi, and maybe by other host proteases, to yield the mature GP1 and GP2 proteins. The cleavage site corresponds to the furin optimal cleavage sequence [KR]-X-[KR]-R. This cleavage does not seem to be required for function. After the internalization of the virus into cell endosomes, GP1 C-terminus is removed by the endosomal proteases cathepsin B, cathepsin L, or both, leaving a 19-kDa N-terminal fragment which is further digested by cathepsin B. Proteolytic processing of GP1,2 by host ADAM17 can remove the transmembrane anchor of GP2 and leads to shedding of complexes consisting in GP1 and truncated GP2 (GP1,2delta).

It localises to the virion membrane. The protein resides in the host cell membrane. Its subcellular location is the secreted. Its function is as follows. Trimeric GP1,2 complexes form the virion surface spikes and mediate the viral entry processes, with GP1 acting as the receptor-binding subunit and GP2 as the membrane fusion subunit. At later times of infection, down-regulates the expression of various host cell surface molecules that are essential for immune surveillance and cell adhesion. Down-modulates several integrins including ITGA1, ITGA2, ITGA3, ITGA4, ITGA5, ITGA6, ITGAV and ITGB1. This decrease in cell adhesion molecules may lead to cell detachment, contributing to the disruption of blood vessel integrity and hemorrhages developed during infection (cytotoxicity). Interacts with host TLR4 and thereby stimulates the differentiation and activation of monocytes leading to bystander death of T-lymphocytes. Down-regulates as well the function of host natural killer cells. Counteracts the antiviral effect of host BST2/tetherin that restricts release of progeny virions from infected cells. However, cooperates with VP40 and host BST2 to activate canonical NF-kappa-B pathway in a manner dependent on neddylation. In terms of biological role, functions as a decoy for anti-GP1,2 antibodies thereby contributing to viral immune evasion. Interacts and activates host macrophages and dendritic cells inducing up-regulation of cytokine transcription. This effect is mediated throught activation of host TLR4. Responsible for binding to the receptor(s) on target cells. Interacts with CD209/DC-SIGN and CLEC4M/DC-SIGNR which act as cofactors for virus entry into dendritic cells (DCs) and endothelial cells. Binding to the macrophage specific lectin CLEC10A also seems to enhance virus infectivity. Interaction with FOLR1/folate receptor alpha may be a cofactor for virus entry in some cell types, although results are contradictory. Members of the Tyro3 receptor tyrosine kinase family also seem to be cell entry factors in filovirus infection. Once attached, the virions are internalized through clathrin-dependent endocytosis and/or macropinocytosis. After internalization of the virus into the endosomes of the host cell, proteolysis of GP1 by two cysteine proteases, CTSB/cathepsin B and CTSL/cathepsin L removes the glycan cap and allows GP1 binding to the host entry receptor NPC1. NPC1-binding, Ca(2+) and acidic pH induce a conformational change of GP2, which unmasks its fusion peptide and permit membranes fusion. Functionally, acts as a class I viral fusion protein. Under the current model, the protein has at least 3 conformational states: pre-fusion native state, pre-hairpin intermediate state, and post-fusion hairpin state. During viral and target cell membrane fusion, the coiled coil regions (heptad repeats) assume a trimer-of-hairpins structure, positioning the fusion peptide in close proximity to the C-terminal region of the ectodomain. The formation of this structure appears to drive apposition and subsequent fusion of viral and target cell membranes. Responsible for penetration of the virus into the cell cytoplasm by mediating the fusion of the membrane of the endocytosed virus particle with the endosomal membrane. Low pH in endosomes induces an irreversible conformational change in GP2, releasing the fusion hydrophobic peptide. The protein is Envelope glycoprotein (GP) of Sudan ebolavirus (strain Maleo-79) (SEBOV).